The following is a 54-amino-acid chain: Ribulose bisphosphate carboxylase large chain (54 aa).

The propeptide occupies 1–2 (MS). Proline 3 carries the post-translational modification N-acetylproline. Position 14 is an N6,N6,N6-trimethyllysine (lysine 14).

This sequence belongs to the RuBisCO large chain family. Type I subfamily. Heterohexadecamer of 8 large chains and 8 small chains.

Its subcellular location is the plastid. The protein localises to the chloroplast. It catalyses the reaction 2 (2R)-3-phosphoglycerate + 2 H(+) = D-ribulose 1,5-bisphosphate + CO2 + H2O. The catalysed reaction is D-ribulose 1,5-bisphosphate + O2 = 2-phosphoglycolate + (2R)-3-phosphoglycerate + 2 H(+). Its function is as follows. RuBisCO catalyzes two reactions: the carboxylation of D-ribulose 1,5-bisphosphate, the primary event in carbon dioxide fixation, as well as the oxidative fragmentation of the pentose substrate in the photorespiration process. Both reactions occur simultaneously and in competition at the same active site. This is Ribulose bisphosphate carboxylase large chain (rbcL) from Ilex aquifolium (English holly).